We begin with the raw amino-acid sequence, 484 residues long: Ribosome biogenesis protein YTM1 (484 aa).

The interval 11–94 (VKVLFTTTEQ…EKTVTLQYVR (84 aa)) is ubiquitin-like (UBL) domain. WD repeat units follow at residues 121 to 160 (SSAGKWSGSSFLQGQDRILSASYDGLLRIWNGSGQALATS), 166 to 204 (GPLCGLKSAKFMSSTKIAAAGLDRTVRIWDYTEADDHFS), 215 to 254 (GHRSIIESLGVDGSSRRILTACADGSIGLWTTSKKLAPEA), 289 to 329 (VHSR…VVST), 331 to 372 (TTSN…AATS), 378 to 418 (GHIN…PAAG), and 448 to 484 (GEGVKVFDVQWDKTWGIVSGGEDKKVQINKGRNIISS).

It belongs to the WD repeat WDR12/YTM1 family. Component of the NOP7 complex, composed of ERB1, NOP7 and YTM1. The complex is held together by ERB1, which interacts with NOP7 via its N-terminal domain and with YTM1 via a high-affinity interaction between the seven-bladed beta-propeller domains of the 2 proteins. The NOP7 complex associates with the 66S pre-ribosome. Interacts (via UBL domain) with MDN1 (via VWFA/MIDAS domain).

Its subcellular location is the nucleus. It localises to the nucleolus. The protein resides in the nucleoplasm. Functionally, component of the NOP7 complex, which is required for maturation of the 25S and 5.8S ribosomal RNAs and formation of the 60S ribosome. In Pyricularia oryzae (strain 70-15 / ATCC MYA-4617 / FGSC 8958) (Rice blast fungus), this protein is Ribosome biogenesis protein YTM1.